A 127-amino-acid polypeptide reads, in one-letter code: Holo-[acyl-carrier-protein] synthase (127 aa).

Mg(2+) is bound by residues aspartate 8 and glutamate 57.

The protein belongs to the P-Pant transferase superfamily. AcpS family. It depends on Mg(2+) as a cofactor.

The protein localises to the cytoplasm. The enzyme catalyses apo-[ACP] + CoA = holo-[ACP] + adenosine 3',5'-bisphosphate + H(+). Its function is as follows. Transfers the 4'-phosphopantetheine moiety from coenzyme A to a Ser of acyl-carrier-protein. The polypeptide is Holo-[acyl-carrier-protein] synthase (Ruthia magnifica subsp. Calyptogena magnifica).